The chain runs to 479 residues: Anaerobic nitric oxide reductase flavorubredoxin (479 aa).

The tract at residues 30–210 (LRGSSYNSYL…PFSRLVTPKI (181 aa)) is zinc metallo-hydrolase. Fe cation-binding residues include histidine 79, glutamate 81, aspartate 83, histidine 147, aspartate 166, and histidine 227. The 140-residue stretch at 254 to 393 (ITIFYDTMSN…LCREHGREIA (140 aa)) folds into the Flavodoxin-like domain. FMN is bound by residues 260 to 264 (TMSNN) and 342 to 369 (AFGS…EMSL). The Rubredoxin-like domain maps to 423 to 474 (GPRMQCSVCQWIYDPAKGEPMQDVAPGTPWSEVPDNFLCPECSLGKDVFEEL). Positions 428, 431, 461, and 464 each coordinate Fe cation.

In the N-terminal section; belongs to the zinc metallo-hydrolase group 3 family. In terms of assembly, homotetramer. The cofactor is Fe cation. It depends on FMN as a cofactor.

It localises to the cytoplasm. The protein operates within nitrogen metabolism; nitric oxide reduction. Functionally, anaerobic nitric oxide reductase; uses NADH to detoxify nitric oxide (NO), protecting several 4Fe-4S NO-sensitive enzymes. Has at least 2 reductase partners, only one of which (NorW, flavorubredoxin reductase) has been identified. NO probably binds to the di-iron center; electrons enter from the NorW at rubredoxin and are transferred sequentially to the FMN center and the di-iron center. Also able to function as an aerobic oxygen reductase. This chain is Anaerobic nitric oxide reductase flavorubredoxin, found in Shigella dysenteriae serotype 1 (strain Sd197).